The sequence spans 209 residues: Pyridoxine/pyridoxamine 5'-phosphate oxidase (209 aa).

Residues 57–62 (RMVLLK), 72–73 (YT), lysine 79, and glutamine 101 contribute to the FMN site. Residue lysine 62 coordinates substrate. Residues tyrosine 119, arginine 123, and serine 127 each contribute to the substrate site. FMN-binding positions include 136-137 (QS) and tryptophan 181. 187-189 (RLH) contacts substrate. Arginine 191 lines the FMN pocket.

Belongs to the pyridoxamine 5'-phosphate oxidase family. As to quaternary structure, homodimer. FMN serves as cofactor.

It catalyses the reaction pyridoxamine 5'-phosphate + O2 + H2O = pyridoxal 5'-phosphate + H2O2 + NH4(+). It carries out the reaction pyridoxine 5'-phosphate + O2 = pyridoxal 5'-phosphate + H2O2. The protein operates within cofactor metabolism; pyridoxal 5'-phosphate salvage; pyridoxal 5'-phosphate from pyridoxamine 5'-phosphate: step 1/1. It participates in cofactor metabolism; pyridoxal 5'-phosphate salvage; pyridoxal 5'-phosphate from pyridoxine 5'-phosphate: step 1/1. In terms of biological role, catalyzes the oxidation of either pyridoxine 5'-phosphate (PNP) or pyridoxamine 5'-phosphate (PMP) into pyridoxal 5'-phosphate (PLP). This Chelativorans sp. (strain BNC1) protein is Pyridoxine/pyridoxamine 5'-phosphate oxidase.